A 410-amino-acid chain; its full sequence is Proteasome-activating nucleotidase (410 aa).

The stretch at methionine 1 to threonine 70 forms a coiled coil. ATP-binding positions include glycine 195 to leucine 200 and histidine 334. The segment at methionine 408–glycine 410 is docks into pockets in the proteasome alpha-ring to cause gate opening.

This sequence belongs to the AAA ATPase family. As to quaternary structure, homohexamer. The hexameric complex has a two-ring architecture resembling a top hat that caps the 20S proteasome core at one or both ends. Upon ATP-binding, the C-terminus of PAN interacts with the alpha-rings of the proteasome core by binding to the intersubunit pockets.

Its subcellular location is the cytoplasm. ATPase which is responsible for recognizing, binding, unfolding and translocation of substrate proteins into the archaeal 20S proteasome core particle. Is essential for opening the gate of the 20S proteasome via an interaction with its C-terminus, thereby allowing substrate entry and access to the site of proteolysis. Thus, the C-termini of the proteasomal ATPase function like a 'key in a lock' to induce gate opening and therefore regulate proteolysis. Unfolding activity requires energy from ATP hydrolysis, whereas ATP binding alone promotes ATPase-20S proteasome association which triggers gate opening, and supports translocation of unfolded substrates. In Methanothermobacter thermautotrophicus (strain ATCC 29096 / DSM 1053 / JCM 10044 / NBRC 100330 / Delta H) (Methanobacterium thermoautotrophicum), this protein is Proteasome-activating nucleotidase.